We begin with the raw amino-acid sequence, 171 residues long: MHHVVSATTNPAKIQAILQAFNEIFGEGSCHIESVSVESGVPEQPFGSQETRAGARNRVENARCLRPQADFWVAIEAGIDDDSTFSWVVIENAAQRGEARSATLPLPAVILEKVRQGEALGPVMSQYTGIDEIGRKEGAIGVFTAGKLTRSSVYHQAVILALSPFHNAVYR.

Position 8–13 (8–13 (TTNPAK)) interacts with substrate. Positions 38 and 68 each coordinate Mg(2+).

It belongs to the YjjX NTPase family. As to quaternary structure, homodimer. The cofactor is Mg(2+). It depends on Mn(2+) as a cofactor.

The catalysed reaction is XTP + H2O = XDP + phosphate + H(+). It carries out the reaction ITP + H2O = IDP + phosphate + H(+). Phosphatase that hydrolyzes non-canonical purine nucleotides such as XTP and ITP to their respective diphosphate derivatives. Probably excludes non-canonical purines from DNA/RNA precursor pool, thus preventing their incorporation into DNA/RNA and avoiding chromosomal lesions. The polypeptide is Inosine/xanthosine triphosphatase (Citrobacter koseri (strain ATCC BAA-895 / CDC 4225-83 / SGSC4696)).